The primary structure comprises 215 residues: Probable GTP-binding protein EngB (215 aa).

In terms of domain architecture, EngB-type G spans 30–204 (TGIEVAFAGR…RQKLDTWFSE (175 aa)). GTP-binding positions include 38–45 (GRSNAGKS), 65–69 (GRTQL), 83–86 (DLPG), 150–153 (TKAD), and 183–185 (FSS). 2 residues coordinate Mg(2+): S45 and T67.

This sequence belongs to the TRAFAC class TrmE-Era-EngA-EngB-Septin-like GTPase superfamily. EngB GTPase family. Requires Mg(2+) as cofactor.

Necessary for normal cell division and for the maintenance of normal septation. The protein is Probable GTP-binding protein EngB of Escherichia coli O1:K1 / APEC.